We begin with the raw amino-acid sequence, 29 residues long: GSPLTYPCHSAQCEQPCKDANMRFGXCMN.

Cysteine 8 and cysteine 27 are joined by a disulfide.

This sequence belongs to the short scorpion toxin superfamily. Potassium channel inhibitor family. Alpha-KTx 03 subfamily. In terms of tissue distribution, expressed by the venom gland.

It is found in the secreted. In terms of biological role, may play a role in blocking voltage-gated potassium channels Kv1.1/KCNA1, Kv1.3/KCNA3 and Kv1.6/KCNA6. The protein is Potassium channel toxin alpha-KTx 3.15 of Mesobuthus gibbosus (Mediterranean checkered scorpion).